The primary structure comprises 1581 residues: Ankyrin repeat domain-containing protein 26 (1581 aa).

The disordered stretch occupies residues 1-22; it reads MKKIFGFRSKGPSPLGPSARPR. S13 is modified (phosphoserine). 5 ANK repeats span residues 46-76, 80-109, 113-142, 146-175, and 179-208; these read KDMG…GVND, KDRT…EIDA, ESST…DPNV, SGNT…NIEA, and DDLT…SIHA. Disordered regions lie at residues 225–270, 299–343, 361–381, and 488–652; these read RLQR…FDNK, LDNG…PVEG, SASQ…WHKS, and VLNK…QTAA. Over residues 229–250 the composition is skewed to polar residues; that stretch reads SENSNPVDNGSEDGSLTRSYNT. Residues S239 and S260 each carry the phosphoserine modification. Positions 308-319 are enriched in acidic residues; it reads SDSPSESEDAIE. Residues 327–337 are compositionally biased toward polar residues; sequence RVQTLSPSRQS. Over residues 367-381 the composition is skewed to basic and acidic residues; it reads PNHDNLTRADGWHKS. Polar residues predominate over residues 491-504; the sequence is KTETVGMTDAQTFK. Basic and acidic residues-rich tracts occupy residues 505 to 516, 524 to 538, and 585 to 601; these read SEPESVSREEQT, SQQK…KNNE, and KEAK…REPA. A Phosphoserine modification is found at S511. 4 coiled-coil regions span residues 715–845, 876–1345, 1396–1470, and 1521–1550; these read RSHC…NARM, HEKE…MVEH, RSQM…RSLL, and LTKM…FCRV.

In terms of assembly, interacts with TRIO. Interacts with GPS2. Interacts with CCDC85B. Interacts with HMMR. As to expression, widely expressed. Expressed in the arcuate and ventromedial nuclei within the hypothalamus and in the ependyma and the circumventricular organs (at protein level).

Its subcellular location is the cytoplasm. It localises to the cytosol. Functionally, acts as a regulator of adipogenesis. Involved in the regulation of the feeding behavior. The chain is Ankyrin repeat domain-containing protein 26 (Ankrd26) from Mus musculus (Mouse).